The primary structure comprises 45 residues: MKSNRQARHILGLDHKISNQRKIVTEGDKSSVVNNPTGRKRPAEK.

The interval 21–45 is disordered; it reads RKIVTEGDKSSVVNNPTGRKRPAEK.

It belongs to the SRA family. As to quaternary structure, associates exclusively with the 30S subunit; there is 0.1 copy per ribosome in the exponential phase and 0.4 copies per ribosome in the stationary phase.

Functionally, although this protein associates with the 30S subunit of the ribosome it is not considered to be a bona fide ribosomal protein. This Escherichia coli O157:H7 protein is Stationary-phase-induced ribosome-associated protein (sra).